The primary structure comprises 391 residues: MSLNPRDVVIVDFGRTPMGRSKGGMHRNTRAEDMSAHLISKLLERNGKVDPKEVEDVIWGCVNQTLEQGWNIARMASLMTPIPHTSAAQTVSRLCGSSMSALHTAAQAIMTGNGDVFVVGGVEHMGHVSMMHGVDPNPHLSLHAAKASGMMGLTAEMLGKMHGITREQQDLFGLRSHQLAHKATVEGKFKDEIIPMQGYDENGFLKVFDFDETIRPETTLEGLASLKPAFNPKGGTVTAGTSSQITDGASCMIVMSGQRAMDLGIQPLAVIRSMAVAGVDPAIMGYGPVPSTQKALKRAGLTMADIDFIELNEAFAAQALPVLKDLKVLDKMDEKVNLHGGAIALGHPFGCSGARISGTLLNVMKQNGGTLGVATMCVGLGQGITTVFERV.

Cysteine 95 functions as the Acyl-thioester intermediate in the catalytic mechanism. Catalysis depends on proton acceptor residues histidine 347 and cysteine 377.

This sequence belongs to the thiolase-like superfamily. Thiolase family. In terms of assembly, heterotetramer of two alpha chains (FadB) and two beta chains (FadA).

Its subcellular location is the cytoplasm. It catalyses the reaction an acyl-CoA + acetyl-CoA = a 3-oxoacyl-CoA + CoA. It participates in lipid metabolism; fatty acid beta-oxidation. Its function is as follows. Catalyzes the final step of fatty acid oxidation in which acetyl-CoA is released and the CoA ester of a fatty acid two carbons shorter is formed. This is 3-ketoacyl-CoA thiolase from Pseudomonas putida (strain ATCC 47054 / DSM 6125 / CFBP 8728 / NCIMB 11950 / KT2440).